A 224-amino-acid chain; its full sequence is Oxalate oxidase 2 (224 aa).

Residues 1-23 form the signal peptide; the sequence is MGYSKTLAVSLFAVLLLAPAVLA. Cysteine 33 and cysteine 49 are oxidised to a cystine. Residues 63–214 form the Cupin type-1 domain; the sequence is SKLAKAGNTS…ALRVEAGVVE (152 aa). Residues asparagine 70 and asparagine 75 are each glycosylated (N-linked (GlcNAc...) asparagine). Mn(2+) is bound by residues histidine 111, histidine 113, glutamate 118, and histidine 160.

This sequence belongs to the germin family. Oligomer (believed to be a pentamer but probably hexamer). Glycosylated. A form called G contains antennary GlcNAc residues, whereas a form called G' lacks antennary GlcNAc residues in its otherwise identical glycans. In terms of tissue distribution, root.

Its subcellular location is the secreted. It localises to the extracellular space. It is found in the apoplast. The protein resides in the cell wall. It carries out the reaction oxalate + O2 + 2 H(+) = H2O2 + 2 CO2. Releases hydrogen peroxide in the apoplast. May play an important role in several aspects of plant growth and defense mechanisms. The protein is Oxalate oxidase 2 of Hordeum vulgare (Barley).